Reading from the N-terminus, the 383-residue chain is Guanine nucleotide-binding protein alpha-1 subunit (383 aa).

Residues 1 to 20 (MGLLCSRSRHHTEDTDENTQ) are disordered. Glycine 2 is lipidated: N-myristoyl glycine. The S-palmitoyl cysteine moiety is linked to residue cysteine 5. In terms of domain architecture, G-alpha spans 37 to 383 (HIRKLLLLGA…RRNLLEAGLL (347 aa)). A G1 motif region spans residues 40-53 (KLLLLGAGESGKST). Residues glutamate 48, serine 49, glycine 50, lysine 51, serine 52, threonine 53, aspartate 162, leucine 187, tyrosine 188, threonine 193, glycine 221, asparagine 287, lysine 288, aspartate 290, and alanine 355 each coordinate GTP. Residue serine 52 participates in Mg(2+) binding. Residues 185–193 (DVLYARVRT) form a G2 motif region. Threonine 193 serves as a coordination point for Mg(2+). The segment at 214 to 223 (YRLFDVGGQR) is G3 motif. Residues 283 to 290 (MLFLNKFD) form a G4 motif region. The segment at 353-358 (TTALDQ) is G5 motif.

This sequence belongs to the G-alpha family. As to quaternary structure, g proteins are composed of 3 units; alpha, beta and gamma. The alpha chain contains the guanine nucleotide binding site. Interacts with RGS1, THF1, the pirin protein PRN1, GTG1 and GTG2. Binds to GCR1. May interact with ADT3. No interactions with RACK1A, RACK1B or RACK1C. Interacts with PLDALPHA1. Interacts with CAND2/PMTR1. It depends on Mg(2+) as a cofactor. In terms of tissue distribution, more abundant in roots and/or leaves.

The protein resides in the cell membrane. Exhibits a fast rate of basal nucleotide exchange. Guanine nucleotide-binding proteins (G proteins) are involved as modulators or transducers in various transmembrane signaling systems. Together with GCR1, may regulate the cell cycle via a signaling cascade that uses phosphatidylinositol-specific phospholipase C (PI-PLC) as an effector and inositol 1,4,5-trisphosphate (IP(3)) as a second messenger. Promotes abscisic acid (ABA) responses in guard cells. Involved in the blue light (BL) signaling. Together with GCR1 and ADT3, required for BL-mediated synthesis of phenylpyruvate and subsequently of phenylalanine (Phe), in etiolated seedlings. Modulates root architecture (e.g. lateral root formation). Negatively regulated by RGS1. In collaboration with CAND2/PMTR1, regulates the melatonin-mediated stomatal closure involving H(2)O(2) and Ca(2+) signals. The chain is Guanine nucleotide-binding protein alpha-1 subunit from Arabidopsis thaliana (Mouse-ear cress).